We begin with the raw amino-acid sequence, 182 residues long: Acireductone dioxygenase (182 aa).

4 residues coordinate Fe(2+): His100, His102, Glu106, and His145. 4 residues coordinate Ni(2+): His100, His102, Glu106, and His145.

The protein belongs to the acireductone dioxygenase (ARD) family. In terms of assembly, monomer. Requires Fe(2+) as cofactor. Ni(2+) is required as a cofactor.

It carries out the reaction 1,2-dihydroxy-5-(methylsulfanyl)pent-1-en-3-one + O2 = 3-(methylsulfanyl)propanoate + CO + formate + 2 H(+). The catalysed reaction is 1,2-dihydroxy-5-(methylsulfanyl)pent-1-en-3-one + O2 = 4-methylsulfanyl-2-oxobutanoate + formate + 2 H(+). It functions in the pathway amino-acid biosynthesis; L-methionine biosynthesis via salvage pathway; L-methionine from S-methyl-5-thio-alpha-D-ribose 1-phosphate: step 5/6. Functionally, catalyzes 2 different reactions between oxygen and the acireductone 1,2-dihydroxy-3-keto-5-methylthiopentene (DHK-MTPene) depending upon the metal bound in the active site. Fe-containing acireductone dioxygenase (Fe-ARD) produces formate and 2-keto-4-methylthiobutyrate (KMTB), the alpha-ketoacid precursor of methionine in the methionine recycle pathway. Ni-containing acireductone dioxygenase (Ni-ARD) produces methylthiopropionate, carbon monoxide and formate, and does not lie on the methionine recycle pathway. This is Acireductone dioxygenase from Nostoc sp. (strain PCC 7120 / SAG 25.82 / UTEX 2576).